A 335-amino-acid chain; its full sequence is tRNA pseudouridine synthase D (335 aa).

D77 serves as the catalytic Nucleophile. The TRUD domain occupies G152 to P308.

This sequence belongs to the pseudouridine synthase TruD family.

It carries out the reaction uridine(13) in tRNA = pseudouridine(13) in tRNA. Responsible for synthesis of pseudouridine from uracil-13 in transfer RNAs. This chain is tRNA pseudouridine synthase D, found in Histophilus somni (strain 129Pt) (Haemophilus somnus).